The primary structure comprises 1379 residues: DNA-directed RNA polymerase subunit beta'' (1379 aa).

The Zn(2+) site is built by cysteine 224, cysteine 295, cysteine 302, and cysteine 305. The segment at 503–524 (SVQSLSVKRRSTSKLSETNDEA) is disordered.

This sequence belongs to the RNA polymerase beta' chain family. RpoC2 subfamily. As to quaternary structure, in plastids the minimal PEP RNA polymerase catalytic core is composed of four subunits: alpha, beta, beta', and beta''. When a (nuclear-encoded) sigma factor is associated with the core the holoenzyme is formed, which can initiate transcription. It depends on Zn(2+) as a cofactor.

It is found in the plastid. The catalysed reaction is RNA(n) + a ribonucleoside 5'-triphosphate = RNA(n+1) + diphosphate. Functionally, DNA-dependent RNA polymerase catalyzes the transcription of DNA into RNA using the four ribonucleoside triphosphates as substrates. The protein is DNA-directed RNA polymerase subunit beta'' of Cuscuta exaltata (Tall dodder).